The sequence spans 234 residues: ATP synthase subunit a 2 (234 aa).

6 consecutive transmembrane segments (helical) span residues 29-49 (FFQHVTHTWLVMAILIGVGLL), 90-110 (LIATLALFLLVSNLIGLIPGF), 116-136 (SLNTNAALAVGVFLVTHIVGV), 147-167 (FMGPVWWLTPLILPIELIGHL), 186-206 (IVLMIFFSLVPLLLPIPMMLM), and 207-227 (GILVAFIQTFVFMLLSMIYIA).

It belongs to the ATPase A chain family. F-type ATPases have 2 components, CF(1) - the catalytic core - and CF(0) - the membrane proton channel. CF(1) has five subunits: alpha(3), beta(3), gamma(1), delta(1), epsilon(1). CF(0) has three main subunits: a(1), b(2) and c(9-12). The alpha and beta chains form an alternating ring which encloses part of the gamma chain. CF(1) is attached to CF(0) by a central stalk formed by the gamma and epsilon chains, while a peripheral stalk is formed by the delta and b chains.

It localises to the cell inner membrane. Key component of the proton channel; it plays a direct role in the translocation of protons across the membrane. This is ATP synthase subunit a 2 from Syntrophotalea carbinolica (strain DSM 2380 / NBRC 103641 / GraBd1) (Pelobacter carbinolicus).